A 258-amino-acid polypeptide reads, in one-letter code: Phosphate import ATP-binding protein PstB (258 aa).

The ABC transporter domain occupies 12–253 (IEVKNLNFYY…PARKETEDYI (242 aa)). Position 44 to 51 (44 to 51 (GPSGCGKS)) interacts with ATP.

This sequence belongs to the ABC transporter superfamily. Phosphate importer (TC 3.A.1.7) family. In terms of assembly, the complex is composed of two ATP-binding proteins (PstB), two transmembrane proteins (PstC and PstA) and a solute-binding protein (PstS).

Its subcellular location is the cell inner membrane. The enzyme catalyses phosphate(out) + ATP + H2O = ADP + 2 phosphate(in) + H(+). Functionally, part of the ABC transporter complex PstSACB involved in phosphate import. Responsible for energy coupling to the transport system. The protein is Phosphate import ATP-binding protein PstB of Bordetella avium (strain 197N).